We begin with the raw amino-acid sequence, 104 residues long: Gastrin (104 aa).

The first 21 residues, 1 to 21 (MQRLCVCVLILALALTAFSEA), serve as a signal peptide directing secretion. Residues 22–49 (SWKPRSQLQDAPSGPGANGGLEPHWLNR) form a disordered region. The propeptide occupies 22–58 (SWKPRSQLQDAPSGPGANGGLEPHWLNRLGPASHHRW). A pyrrolidone carboxylic acid mark is found at Gln59 and Gln76. Tyr87 carries the sulfotyrosine modification. A Phenylalanine amide modification is found at Phe92. The residue at position 96 (Ser96) is a Phosphoserine. Residues 96–104 (SAEDGDQHP) constitute a propeptide that is removed on maturation.

This sequence belongs to the gastrin/cholecystokinin family.

The protein resides in the secreted. Functionally, gastrin stimulates the stomach mucosa to produce and secrete hydrochloric acid and the pancreas to secrete its digestive enzymes. It also stimulates smooth muscle contraction and increases blood circulation and water secretion in the stomach and intestine. The polypeptide is Gastrin (GAST) (Felis catus (Cat)).